The sequence spans 534 residues: MSENKTRVDNAATGDIKHQGKDIFFAAVETTRMPMIVTDPNRPDNPIIFANRAFLEMTGYASEEIIGSNCRFLQGPDTDRTAVQSIRDAIDQRVDISTEILNYRKDGSSFWNALFISPVYNDAGELIYFFASQLDISRRRDAEEALRQAQKMEALGQLTGGIAHDFNNLLQVMGGYIDLIGSAAEKPVIDVQRVQRSVHHAKSAVERASTLTKQLLAFARKQKLQGRVLNLNGLVSTTEPLIERTFGPEVIIETDLDPALKNCRIDPTQAEVALLNIFINARDALIGRLNPKIFIETRNLVVDELANMSYDGLLPGRYVSIAVTDNGIGMPASIRDRVMDPFFTTKEEGKGSGLGLSMVYGFAKQSGGAARIYTEEGVGTTLRLYFPVDEAVLSKNDPPKASERRIGSSERILIVEDRPDVAELAKMVLDDYGYVSEIVLNAREALKRFEAGATYDLLFTDLIMPGGMNGVMLAREVRRRFPKVKVLLTTGYAESSIERTDIGGSEFEVVSKPCMPQDLARKVRQVLDGPNGIA.

In terms of domain architecture, PAS spans 20 to 93; it reads GKDIFFAAVE…QSIRDAIDQR (74 aa). Residue Cys-70 is modified to S-4a-FMN cysteine. The PAC domain occupies 94 to 148; the sequence is VDISTEILNYRKDGSSFWNALFISPVYNDAGELIYFFASQLDISRRRDAEEALRQ. Positions 161-390 constitute a Histidine kinase domain; sequence GIAHDFNNLL…TLRLYFPVDE (230 aa). His-164 is modified (phosphohistidine; by autocatalysis). A Response regulatory domain is found at 411 to 527; the sequence is RILIVEDRPD…DLARKVRQVL (117 aa). At Asp-461 the chain carries 4-aspartylphosphate.

In terms of processing, FMN binds covalently to cysteine after exposure to blue light and this bond is spontaneously broken in the dark.

The enzyme catalyses ATP + protein L-histidine = ADP + protein N-phospho-L-histidine.. In terms of biological role, photosensitive kinase and response regulator that is involved in increased bacterial virulence upon exposure to light. This Pseudomonas syringae pv. syringae (strain B728a) protein is Blue-light-activated protein.